The sequence spans 914 residues: MRFTATAAALVASSIPATLGQHVRDLSNEKWTLSSDALNHTVPGNLPSHAHLDLLKAGVIDDPYHGLNDFNLRWIPESNWTYTTDKIKDLMPIEFCGKYVASTNNQYRQYSFDVSQILEGCNEDPILKIDFGSAPNIVNAIAEDRNSPVWPDGIQQTYEYPNRWFMRKEQSDFGWDWGPAFAPAGPWKPAYIVQLPKAQNIHVLNTDLDIYRKGQINHLPPDQSQPWVVNASIDFVGSLPPNPSMSIEFKDTKSGEILTSKRIGNVTVSGNSVTGVTVLGGVTPKLWWPLGLGDQNLYNITVTVTGHQNQTLAHVTKRTGFRTIFLNQRNITDAQLAQGIAPGANWHFEVNGHEFYAKGSNIIPPDAFWPRVTEARMARLFDAVVAGNQNMLRVWSSGIYLHDFIYDLADERGILLWSEFEFSDALYPVDDAFLDNIAAEVVYNVRRVNHHPSLALWAGGNEIESLMLPTVERKAPEEYAKYVGEYEKLYISLILPLVYQNTRSITYSPSSTTEGYLDVDLSAPVPMVERYHNTTPGSYYGDTDFYNYDSSVSFNSHVYPVGRFANEFGYHSMPSLQTWQQAVDPEDLHFNSTTVMLRNHHYPAGGTFTDNFHNTSLGMGEMTIAVQRYYPIPNKLDSVANFSAWCHATQLFQADMYKSEIQFYRRGSGMPERQLGSLYWQLEDIWQAPSWAGIEYGGRWKVLHYVSRDIYQRIIVSPFWNYTTGDLDLYVTSDLWESAKGKVNLTWLDLSGTPLPHNAGTPGSVPFNVGALNTTKIYSTNIKNLTLPNPKDAILVLSLSGEGHLPNSDKKTTFTHQNHFTPVFPKDLALVDPGLELSYNTKSKTFTVEAKSGVSLYTWLDYPADVVGYFDENAFVLLPGQKKEIGFTVQEDNTDGKWVQGVTVQSLWNQTLEK.

Residues 1–20 form the signal peptide; the sequence is MRFTATAAALVASSIPATLG. N-linked (GlcNAc...) asparagine glycosylation is found at Asn-39, Asn-79, Asn-230, Asn-265, Asn-299, Asn-309, and Asn-330. Glu-462 acts as the Proton donor in catalysis. 8 N-linked (GlcNAc...) asparagine glycosylation sites follow: Asn-591, Asn-614, Asn-641, Asn-721, Asn-744, Asn-773, Asn-784, and Asn-909.

Belongs to the glycosyl hydrolase 2 family. Beta-mannosidase A subfamily. Homodimer.

The protein localises to the secreted. It catalyses the reaction Hydrolysis of terminal, non-reducing beta-D-mannose residues in beta-D-mannosides.. It functions in the pathway glycan metabolism; N-glycan degradation. Its function is as follows. Exoglycosidase that cleaves the single beta-linked mannose residue from the non-reducing end of beta-mannosidic oligosaccharides of various complexity and length. Involved in the degradation of polymeric mannan and galactomannan. The polypeptide is Beta-mannosidase A (mndA) (Aspergillus flavus (strain ATCC 200026 / FGSC A1120 / IAM 13836 / NRRL 3357 / JCM 12722 / SRRC 167)).